Consider the following 248-residue polypeptide: Probable transcriptional regulatory protein LAR_0538 (248 aa).

The disordered stretch occupies residues 1 to 22 (MSGHSKWHNIQGRKNAQDAKRG).

It belongs to the TACO1 family.

The protein resides in the cytoplasm. The polypeptide is Probable transcriptional regulatory protein LAR_0538 (Limosilactobacillus reuteri subsp. reuteri (strain JCM 1112) (Lactobacillus reuteri)).